A 197-amino-acid polypeptide reads, in one-letter code: ATP-dependent Clp protease proteolytic subunit 1 (197 aa).

Ser99 functions as the Nucleophile in the catalytic mechanism. His124 is a catalytic residue.

It belongs to the peptidase S14 family. In terms of assembly, fourteen ClpP subunits assemble into 2 heptameric rings which stack back to back to give a disk-like structure with a central cavity, resembling the structure of eukaryotic proteasomes.

It localises to the cytoplasm. The enzyme catalyses Hydrolysis of proteins to small peptides in the presence of ATP and magnesium. alpha-casein is the usual test substrate. In the absence of ATP, only oligopeptides shorter than five residues are hydrolyzed (such as succinyl-Leu-Tyr-|-NHMec, and Leu-Tyr-Leu-|-Tyr-Trp, in which cleavage of the -Tyr-|-Leu- and -Tyr-|-Trp bonds also occurs).. Functionally, cleaves peptides in various proteins in a process that requires ATP hydrolysis. Has a chymotrypsin-like activity. Plays a major role in the degradation of misfolded proteins. The protein is ATP-dependent Clp protease proteolytic subunit 1 of Treponema denticola (strain ATCC 35405 / DSM 14222 / CIP 103919 / JCM 8153 / KCTC 15104).